A 362-amino-acid chain; its full sequence is Ribosomal RNA large subunit methyltransferase F (362 aa).

Positions 1–28 (MNTPLKPKHGQKTNRKPKANKPVVKKQQ) are enriched in basic residues. A disordered region spans residues 1–40 (MNTPLKPKHGQKTNRKPKANKPVVKKQQTKQPPTHKVQGE).

The protein belongs to the methyltransferase superfamily. METTL16/RlmF family.

Its subcellular location is the cytoplasm. The catalysed reaction is adenosine(1618) in 23S rRNA + S-adenosyl-L-methionine = N(6)-methyladenosine(1618) in 23S rRNA + S-adenosyl-L-homocysteine + H(+). Specifically methylates the adenine in position 1618 of 23S rRNA. In Vibrio cholerae serotype O1 (strain M66-2), this protein is Ribosomal RNA large subunit methyltransferase F.